Here is a 292-residue protein sequence, read N- to C-terminus: NAD kinase (292 aa).

Residue Asp-73 is the Proton acceptor of the active site. NAD(+) is bound by residues 73–74 (DG), 147–148 (NE), His-158, Arg-175, Asp-177, 188–193 (TAYSLS), and Gln-247.

The protein belongs to the NAD kinase family. A divalent metal cation serves as cofactor.

It localises to the cytoplasm. It carries out the reaction NAD(+) + ATP = ADP + NADP(+) + H(+). Involved in the regulation of the intracellular balance of NAD and NADP, and is a key enzyme in the biosynthesis of NADP. Catalyzes specifically the phosphorylation on 2'-hydroxyl of the adenosine moiety of NAD to yield NADP. The sequence is that of NAD kinase from Escherichia coli (strain SMS-3-5 / SECEC).